Consider the following 318-residue polypeptide: Methionyl-tRNA formyltransferase (318 aa).

Residue 112–115 (SILP) coordinates (6S)-5,6,7,8-tetrahydrofolate.

Belongs to the Fmt family.

It carries out the reaction L-methionyl-tRNA(fMet) + (6R)-10-formyltetrahydrofolate = N-formyl-L-methionyl-tRNA(fMet) + (6S)-5,6,7,8-tetrahydrofolate + H(+). Its function is as follows. Attaches a formyl group to the free amino group of methionyl-tRNA(fMet). The formyl group appears to play a dual role in the initiator identity of N-formylmethionyl-tRNA by promoting its recognition by IF2 and preventing the misappropriation of this tRNA by the elongation apparatus. The protein is Methionyl-tRNA formyltransferase of Shewanella oneidensis (strain ATCC 700550 / JCM 31522 / CIP 106686 / LMG 19005 / NCIMB 14063 / MR-1).